The sequence spans 696 residues: MDAHELSFRDGHGSSTSTMKDGCASAEKPHYLPGDSSFTSVFGPSETVEDVETEPGSTQDKPHSFNTQKPIRENLAGKNVAPFLARHIPEQYAPLGSQGGQPVEISSANSKYCYRHRPDLKCRRQADEPTMDKLQRELETLPQSDQQGIAHAWSIFSAAPAKHRKLILQGIMAQCCFPQLSFISATVRDLIRIDFLTALPPEISFKILCYLDTTSLCKAAQVSRRWRALADDDVVWHRMCEQHIHRKCKKCGWGLPLLDRKRLRESKREIERRAATWDVSKQPAGIEGSSATIETAAAGSKRKPESGKEDTAMVKRQCTSIVSQSEQNEDYFKTRYRPWKEVYKDRFKVGTNWKYGRCSTRVFKGHSNGIMCLQFEDNILATGSYDATIKIWDTETGEELRTLKGHQSGIRCLQFDDTKLISGSMDHTLKVWNWRTGECISTYSGHRGGVVGLHFDATILASGSVDKTVKIWNFEDKSTCLLRGHTDWVNAVRVDSASRTVFSASDDCTVKLWDLDTKSCIRTFHGHVGQVQQVVPLPREFEFEDHDVECENDNVSVTSGDSPAASPQALPGFDGQTSDTPSSAFGPAFDDGRPSPPRYIVTSALDSTIRLWETSSGRCLRTFFGHLEGVWALAADTLRIVSGAEDRMVKIWDPRTGKCERTFTGHSGPVTCIGLGDSRFATGSEDCEVRMYSFQT.

The segment covering 1–12 (MDAHELSFRDGH) has biased composition (basic and acidic residues). The tract at residues 1–72 (MDAHELSFRD…HSFNTQKPIR (72 aa)) is disordered. Polar residues predominate over residues 55-69 (PGSTQDKPHSFNTQK). The 47-residue stretch at 193 to 239 (IDFLTALPPEISFKILCYLDTTSLCKAAQVSRRWRALADDDVVWHRM) folds into the F-box domain. The interval 290–314 (SATIETAAAGSKRKPESGKEDTAMV) is disordered. Positions 302–313 (RKPESGKEDTAM) are enriched in basic and acidic residues. 7 WD repeats span residues 365–402 (GHSN…ELRT), 405–444 (GHQS…STYS), 446–482 (HRGG…TCLL), 484–525 (GHTD…RTFH), 579–622 (DTPS…CLRT), 623–662 (FFGH…CERT), and 665–696 (GHSG…SFQT). The disordered stretch occupies residues 554–596 (NVSVTSGDSPAASPQALPGFDGQTSDTPSSAFGPAFDDGRPSP).

The protein belongs to the WD repeat MET30/SCONB/SCON-2 family. Component of the SCF(sconB) E3 ubiquitin ligase complex.

The protein operates within protein modification; protein ubiquitination. Component of the SCF(sconB) E3 ubiquitin ligase complex involved in the regulation of sulfur metabolite repression, probably by mediating the inactivation or degradation of the metR transcription factor. This Aspergillus fumigatus (strain ATCC MYA-4609 / CBS 101355 / FGSC A1100 / Af293) (Neosartorya fumigata) protein is Probable E3 ubiquitin ligase complex SCF subunit sconB (sconB).